We begin with the raw amino-acid sequence, 657 residues long: Broad substrate specificity ATP-binding cassette transporter ABCG2 (657 aa).

A disordered region spans residues Met1–Ser25. Residues Met1–Ser395 lie on the Cytoplasmic side of the membrane. Residues Val48–Pro285 form the ABC transporter domain. Residues Gly79–Ser86, Arg183–Glu189, Glu210, and His242 contribute to the ATP site. Residues Leu389–Leu653 enclose the ABC transmembrane type-2 domain. A helical transmembrane segment spans residues Val396–Leu416. Residues Lys417–Gly428 lie on the Extracellular side of the membrane. Residues Val429 to Val449 form a helical membrane-spanning segment. Over Val450–Asp477 the chain is Cytoplasmic. A helical membrane pass occupies residues Leu478–Gly498. Topologically, residues Leu499–Phe506 are extracellular. Residues Phe507–Ile527 form a helical membrane-spanning segment. Residues Ala528 to Ser535 lie on the Cytoplasmic side of the membrane. A helical membrane pass occupies residues Val536–Val556. Residues Asn557–His632 are Extracellular-facing. A disulfide bond links Cys592 and Cys610. N-linked (GlcNAc...) asparagine glycans are attached at residues Asn596 and Asn600. The helical transmembrane segment at Val633–Leu653 threads the bilayer. The Cytoplasmic portion of the chain corresponds to Lys654 to Ser657.

Belongs to the ABC transporter superfamily. ABCG family. Eye pigment precursor importer (TC 3.A.1.204) subfamily. In terms of assembly, homodimer; disulfide-linked. The minimal functional unit is a homodimer, but the major oligomeric form in plasma membrane is a homotetramer with possibility of higher order oligomerization up to homododecamers. In terms of processing, N-glycosylated in brain capillary, kidney and small intestine but not in heart. Post-translationally, N-glycosylated. Glycosylation-deficient ABCG2 is normally expressed and functional. Phosphorylated. Phosphorylation may regulate the localization to the plasma membrane, the homooligomerization and therefore, the activity of the transporter. As to expression, highly expressed in brain capillary, kidney and small intestine. Lower expression in heart. Preferentially expressed (at protein level) on the luminal membrane of brain capillaries, in kidney and small intestine.

The protein localises to the cell membrane. It is found in the apical cell membrane. The protein resides in the mitochondrion membrane. It catalyses the reaction ATP + H2O + xenobioticSide 1 = ADP + phosphate + xenobioticSide 2.. It carries out the reaction urate(in) + ATP + H2O = urate(out) + ADP + phosphate + H(+). The catalysed reaction is indoxyl sulfate(in) + ATP + H2O = indoxyl sulfate(out) + ADP + phosphate + H(+). The enzyme catalyses sphing-4-enine 1-phosphate(in) + ATP + H2O = sphing-4-enine 1-phosphate(out) + ADP + phosphate + H(+). It catalyses the reaction estrone 3-sulfate(in) + ATP + H2O = estrone 3-sulfate(out) + ADP + phosphate + H(+). It carries out the reaction dehydroepiandrosterone 3-sulfate(in) + ATP + H2O = dehydroepiandrosterone 3-sulfate(out) + ADP + phosphate + H(+). The catalysed reaction is 4-methylumbelliferone sulfate(in) + ATP + H2O = 4-methylumbelliferone sulfate(out) + ADP + phosphate + H(+). The enzyme catalyses 5,7-dimethyl-2-methylamino-4-(3-pyridylmethyl)-1,3-benzothiazol-6-yl beta-D-glucuronate(in) + ATP + H2O = 5,7-dimethyl-2-methylamino-4-(3-pyridylmethyl)-1,3-benzothiazol-6-yl beta-D-glucuronate(out) + ADP + phosphate + H(+). It catalyses the reaction 4-methylumbelliferone beta-D-glucuronate(in) + ATP + H2O = 4-methylumbelliferone beta-D-glucuronate(out) + ADP + phosphate + H(+). It carries out the reaction 5,7-dimethyl-2-methylamino-4-(3-pyridylmethyl)-1,3-benzothiazol-6-yl sulfate(in) + ATP + H2O = 5,7-dimethyl-2-methylamino-4-(3-pyridylmethyl)-1,3-benzothiazol-6-yl sulfate(out) + ADP + phosphate + H(+). The catalysed reaction is 17beta-estradiol 17-O-(beta-D-glucuronate)(in) + ATP + H2O = 17beta-estradiol 17-O-(beta-D-glucuronate)(out) + ADP + phosphate + H(+). The enzyme catalyses methotrexate(in) + ATP + H2O = methotrexate(out) + ADP + phosphate + H(+). It catalyses the reaction riboflavin(in) + ATP + H2O = riboflavin(out) + ADP + phosphate + H(+). It carries out the reaction pheophorbide a(in) + ATP + H2O = pheophorbide a(out) + ADP + phosphate + H(+). The catalysed reaction is itaconate(in) + ATP + H2O = itaconate(out) + ADP + phosphate + H(+). Functionally, broad substrate specificity ATP-dependent transporter of the ATP-binding cassette (ABC) family that actively extrudes a wide variety of physiological compounds, dietary toxins and xenobiotics from cells. Involved in porphyrin homeostasis, mediating the export of protoporphyrin IX (PPIX) from both mitochondria to cytosol and cytosol to extracellular space, it also functions in the cellular export of heme. Also mediates the efflux of sphingosine-1-P from cells. Acts as a urate exporter functioning in both renal and extrarenal urate excretion. In kidney, it also functions as a physiological exporter of the uremic toxin indoxyl sulfate. Also involved in the excretion of steroids like estrone 3-sulfate/E1S, 3beta-sulfooxy-androst-5-en-17-one/DHEAS, and other sulfate conjugates. Mediates the secretion of the riboflavin and biotin vitamins into milk. Extrudes pheophorbide a, a phototoxic porphyrin catabolite of chlorophyll, reducing its bioavailability. Plays an important role in the exclusion of xenobiotics from the brain. It confers to cells a resistance to multiple drugs and other xenobiotics including mitoxantrone, pheophorbide, camptothecin, methotrexate, azidothymidine, and the anthracyclines daunorubicin and doxorubicin, through the control of their efflux. In placenta, it limits the penetration of drugs from the maternal plasma into the fetus. May play a role in early stem cell self-renewal by blocking differentiation. In inflammatory macrophages, exports itaconate from the cytosol to the extracellular compartment and limits the activation of TFEB-dependent lysosome biogenesis involved in antibacterial innate immune response. The protein is Broad substrate specificity ATP-binding cassette transporter ABCG2 (Abcg2) of Rattus norvegicus (Rat).